Reading from the N-terminus, the 4080-residue chain is Hybrid PKS-NRPS synthetase poxE (4080 aa).

The Ketosynthase family 3 (KS3) domain occupies 8-442 (REPIAIVGSG…GTNAHAIIEA (435 aa)). Catalysis depends on for beta-ketoacyl synthase activity residues Cys-181, His-320, and His-362. The malonyl-CoA:ACP transacylase (MAT) domain stretch occupies residues 554–878 (VFTGQGAQWA…QRGMNDVEAM (325 aa)). The interval 944–1078 (HPILGTRCPD…GRLVITYGPV (135 aa)) is N-terminal hotdog fold. A PKS/mFAS DH domain is found at 944–1246 (HPILGTRCPD…AVPLEATNAD (303 aa)). Positions 945–1243 (PILGTRCPDG…GIHAVPLEAT (299 aa)) are dehydratase (DH) domain. His-976 serves as the catalytic Proton acceptor; for dehydratase activity. A C-terminal hotdog fold region spans residues 1093–1246 (MVDVPSERFY…AVPLEATNAD (154 aa)). The active-site Proton donor; for dehydratase activity is Asp-1152. Positions 1400 to 1585 (HFSDYLASVV…GVDTFTSDAD (186 aa)) are methyltransferase (MT) domain. The segment at 2118 to 2292 (TYWLVGLTGS…AGSVMNIGAI (175 aa)) is ketoreductase (KR)domain. Residues 2399–2478 (TTDEIYEVIK…TIGEIIKFVL (80 aa)) are peptidyl carrier protein. The region spanning 2405–2481 (EVIKECFIVK…EIIKFVLEKL (77 aa)) is the Carrier 1 domain. Ser-2441 carries the post-translational modification O-(pantetheine 4'-phosphoryl)serine. Residues 2488-2569 (SLGLSPPTGA…AASPSIHTEE (82 aa)) are disordered. Over residues 2511-2525 (VVVERRNVPRLEKKI) the composition is skewed to basic and acidic residues. Residues 2528–2545 (SAGSRTSSSVTGTSKSVS) are compositionally biased toward low complexity. The segment covering 2551–2565 (DTASSQTSEAASPSI) has biased composition (polar residues). The interval 2607 to 3036 (KEPLSFGQSR…DSKQPGGHVS (430 aa)) is condensation. The segment at 3069-3478 (DMAKQYPQKL…DGRLRIEGRI (410 aa)) is adenylation. Residues 3593-3673 (AHLNEAQAQM…KMALLIKPQE (81 aa)) form the Carrier 2 domain. A thiolation region spans residues 3598–3670 (AQAQMVQLWE…TLEKMALLIK (73 aa)). Ser-3633 carries the post-translational modification O-(pantetheine 4'-phosphoryl)serine. Residues 3740 to 3959 (LTGATGFIGQ…DFVPVEQVVR (220 aa)) form a reductase (RED) domain region.

The protein in the C-terminal section; belongs to the NRP synthetase family.

Its pathway is secondary metabolite biosynthesis. In terms of biological role, hybrid PKS-NRPS synthetase; part of the gene cluster that mediates the biosynthesis of oxaleimides, cytotoxic compounds containing an unusual disubstituted succinimide moiety. The first step of the pathway is provided by the HR-PKS poxF that serves in a new mode of collaborative biosynthesis with the PKS-NRPS poxE, by providing the olefin containing amino acid substrate via the synthesis of an ACP-bound dec-4-enoate. The cytochrome P450 monooxygenase poxM-catalyzed oxidation at the alpha-position creates the enzyme-bound 2-hydroxydec-4-enoyl-ACP thioester, which may be prone to spontaneous hydrolysis to yield 2-hydroxydec-4-enoic acid due to increased electrophilicity of the carbonyl. 2-hydroxydec-4-enoic acid can then be further oxidized by poxM to yield the alpha-ketoacid 2-oxodec-4-enoicacid, which is reductively aminated by the aminotransferase poxL to yield (S,E)-2-aminodec-4-enoic acid. The Hybrid PKS-NRPS synthetase poxE then performs condensation between the octaketide product of its PKS modules and the amino group of (S,E)-2-aminodec-4-enoic acid which is activated and incorporated by the adenylation domain. The resulting aminoacyl product can be cyclized by the Diels-Alderase PoxQ and reductively released by the reductive (R) domain of poxE to yield an aldehyde intermediate. The released aldehyde is then substrate for a Knoevenagel condensation by the hydrolyase poxO followed by an oxidation at the 5-position of the pyrrolidone ring. The presence of the olefin from the amino acid building block allows for migration of the substituted allyl group to occur. This allylic transposition reaction takes place in a conjugate addition, semipinacol-like fashion to yield a succinimide intermediate. Iterative two-electron oxidations of the C7 methyl of the succinimide intermediate to the carboxylic acid can be catalyzed by one of two remaining cytochrome P450 monooxygenasess poxC or poxD to yield oxaleimide A. Subsequent oxidation yields the maleimide scaffold oxaleimide I. Both oxaleimide A and oxaleimide I can undergo oxidative modifications in the decalin ring to yield the series of products oxaleimides B to H. The sequence is that of Hybrid PKS-NRPS synthetase poxE from Penicillium oxalicum (strain 114-2 / CGMCC 5302) (Penicillium decumbens).